The sequence spans 276 residues: Large ribosomal subunit protein uL2 (276 aa).

Positions 225 to 276 are disordered; the sequence is MNPNDHPHGGGEGRNPIGRNPVTPWGKPALGAKTRKKKNPSNRFIVKRRGKK. Residues 257-276 show a composition bias toward basic residues; sequence KTRKKKNPSNRFIVKRRGKK.

It belongs to the universal ribosomal protein uL2 family. As to quaternary structure, part of the 50S ribosomal subunit. Forms a bridge to the 30S subunit in the 70S ribosome.

Functionally, one of the primary rRNA binding proteins. Required for association of the 30S and 50S subunits to form the 70S ribosome, for tRNA binding and peptide bond formation. It has been suggested to have peptidyltransferase activity; this is somewhat controversial. Makes several contacts with the 16S rRNA in the 70S ribosome. The sequence is that of Large ribosomal subunit protein uL2 from Desulfitobacterium hafniense (strain DSM 10664 / DCB-2).